The primary structure comprises 208 residues: ATP-dependent Clp protease proteolytic subunit (208 aa).

S107 (nucleophile) is an active-site residue. Residue H132 is part of the active site.

Belongs to the peptidase S14 family. Fourteen ClpP subunits assemble into 2 heptameric rings which stack back to back to give a disk-like structure with a central cavity, resembling the structure of eukaryotic proteasomes.

It localises to the cytoplasm. The catalysed reaction is Hydrolysis of proteins to small peptides in the presence of ATP and magnesium. alpha-casein is the usual test substrate. In the absence of ATP, only oligopeptides shorter than five residues are hydrolyzed (such as succinyl-Leu-Tyr-|-NHMec, and Leu-Tyr-Leu-|-Tyr-Trp, in which cleavage of the -Tyr-|-Leu- and -Tyr-|-Trp bonds also occurs).. Cleaves peptides in various proteins in a process that requires ATP hydrolysis. Has a chymotrypsin-like activity. Plays a major role in the degradation of misfolded proteins. This Jannaschia sp. (strain CCS1) protein is ATP-dependent Clp protease proteolytic subunit.